A 498-amino-acid chain; its full sequence is ATP synthase subunit beta, chloroplastic (498 aa).

ATP is bound at residue Gly-172–Thr-179.

The protein belongs to the ATPase alpha/beta chains family. As to quaternary structure, F-type ATPases have 2 components, CF(1) - the catalytic core - and CF(0) - the membrane proton channel. CF(1) has five subunits: alpha(3), beta(3), gamma(1), delta(1), epsilon(1). CF(0) has four main subunits: a(1), b(1), b'(1) and c(9-12).

It localises to the plastid. The protein localises to the chloroplast thylakoid membrane. The catalysed reaction is ATP + H2O + 4 H(+)(in) = ADP + phosphate + 5 H(+)(out). Produces ATP from ADP in the presence of a proton gradient across the membrane. The catalytic sites are hosted primarily by the beta subunits. The sequence is that of ATP synthase subunit beta, chloroplastic from Carica papaya (Papaya).